We begin with the raw amino-acid sequence, 482 residues long: tRNA sulfurtransferase (482 aa).

The THUMP domain maps to 61-165 (SAIRDALTRI…QDRLLLIKGR (105 aa)). ATP is bound by residues 183 to 184 (LI), Lys265, Gly287, and Gln296. A disulfide bond links Cys344 and Cys456. The Rhodanese domain maps to 404–482 (FAPTDVLLDI…GFSNVKVYRP (79 aa)). Catalysis depends on Cys456, which acts as the Cysteine persulfide intermediate.

The protein belongs to the ThiI family.

The protein resides in the cytoplasm. The catalysed reaction is [ThiI sulfur-carrier protein]-S-sulfanyl-L-cysteine + a uridine in tRNA + 2 reduced [2Fe-2S]-[ferredoxin] + ATP + H(+) = [ThiI sulfur-carrier protein]-L-cysteine + a 4-thiouridine in tRNA + 2 oxidized [2Fe-2S]-[ferredoxin] + AMP + diphosphate. It carries out the reaction [ThiS sulfur-carrier protein]-C-terminal Gly-Gly-AMP + S-sulfanyl-L-cysteinyl-[cysteine desulfurase] + AH2 = [ThiS sulfur-carrier protein]-C-terminal-Gly-aminoethanethioate + L-cysteinyl-[cysteine desulfurase] + A + AMP + 2 H(+). Its pathway is cofactor biosynthesis; thiamine diphosphate biosynthesis. In terms of biological role, catalyzes the ATP-dependent transfer of a sulfur to tRNA to produce 4-thiouridine in position 8 of tRNAs, which functions as a near-UV photosensor. Also catalyzes the transfer of sulfur to the sulfur carrier protein ThiS, forming ThiS-thiocarboxylate. This is a step in the synthesis of thiazole, in the thiamine biosynthesis pathway. The sulfur is donated as persulfide by IscS. This is tRNA sulfurtransferase from Pectobacterium carotovorum subsp. carotovorum (strain PC1).